Consider the following 117-residue polypeptide: Large ribosomal subunit protein uL18 (117 aa).

This sequence belongs to the universal ribosomal protein uL18 family. As to quaternary structure, part of the 50S ribosomal subunit; part of the 5S rRNA/L5/L18/L25 subcomplex. Contacts the 5S and 23S rRNAs.

Functionally, this is one of the proteins that bind and probably mediate the attachment of the 5S RNA into the large ribosomal subunit, where it forms part of the central protuberance. This is Large ribosomal subunit protein uL18 from Alkalilimnicola ehrlichii (strain ATCC BAA-1101 / DSM 17681 / MLHE-1).